Consider the following 429-residue polypeptide: Serine hydroxymethyltransferase (429 aa).

(6S)-5,6,7,8-tetrahydrofolate is bound by residues Leu-125 and 129-131 (GHL). Lys-234 carries the N6-(pyridoxal phosphate)lysine modification.

Belongs to the SHMT family. As to quaternary structure, homodimer. It depends on pyridoxal 5'-phosphate as a cofactor.

Its subcellular location is the cytoplasm. It catalyses the reaction (6R)-5,10-methylene-5,6,7,8-tetrahydrofolate + glycine + H2O = (6S)-5,6,7,8-tetrahydrofolate + L-serine. The protein operates within one-carbon metabolism; tetrahydrofolate interconversion. It participates in amino-acid biosynthesis; glycine biosynthesis; glycine from L-serine: step 1/1. Catalyzes the reversible interconversion of serine and glycine with tetrahydrofolate (THF) serving as the one-carbon carrier. This reaction serves as the major source of one-carbon groups required for the biosynthesis of purines, thymidylate, methionine, and other important biomolecules. Also exhibits THF-independent aldolase activity toward beta-hydroxyamino acids, producing glycine and aldehydes, via a retro-aldol mechanism. This chain is Serine hydroxymethyltransferase, found in Allorhizobium ampelinum (strain ATCC BAA-846 / DSM 112012 / S4) (Agrobacterium vitis (strain S4)).